The following is a 163-amino-acid chain: Nucleotide-binding protein PMI0103 (163 aa).

The protein belongs to the YajQ family.

Nucleotide-binding protein. This chain is Nucleotide-binding protein PMI0103, found in Proteus mirabilis (strain HI4320).